Consider the following 358-residue polypeptide: Methylthioribose-1-phosphate isomerase (358 aa).

Residues 54-56 (RGA), R96, and Q205 each bind substrate. The active-site Proton donor is D246. 256–257 (NK) provides a ligand contact to substrate.

Belongs to the eIF-2B alpha/beta/delta subunits family. MtnA subfamily.

It catalyses the reaction 5-(methylsulfanyl)-alpha-D-ribose 1-phosphate = 5-(methylsulfanyl)-D-ribulose 1-phosphate. It participates in amino-acid biosynthesis; L-methionine biosynthesis via salvage pathway; L-methionine from S-methyl-5-thio-alpha-D-ribose 1-phosphate: step 1/6. Catalyzes the interconversion of methylthioribose-1-phosphate (MTR-1-P) into methylthioribulose-1-phosphate (MTRu-1-P). This Pseudomonas paraeruginosa (strain DSM 24068 / PA7) (Pseudomonas aeruginosa (strain PA7)) protein is Methylthioribose-1-phosphate isomerase.